The chain runs to 676 residues: PAS domain-containing protein cky-1 (676 aa).

The span at 45–72 (SALNNNSINVPNNNTMGMSSAGSSNGSN) shows a compositional bias: low complexity. Positions 45-89 (SALNNNSINVPNNNTMGMSSAGSSNGSNLVNGQQRSTRGASKQRR) are disordered. Polar residues predominate over residues 73–84 (LVNGQQRSTRGA). Residues 76–89 (GQQRSTRGASKQRR) are basic motif. The region spanning 76-129 (GQQRSTRGASKQRRDQINVEIQKLRDLLPLSDLIKDRLFQLQVMSLGCIFIRKH) is the bHLH domain. The helix-loop-helix motif stretch occupies residues 90 to 129 (DQINVEIQKLRDLLPLSDLIKDRLFQLQVMSLGCIFIRKH). The 51-residue stretch at 165–215 (MLMVTRSGKILHVSDNASEYLGHSVEEIMCQGDSIYDLVDGRDHGAVQAEL) folds into the PAS domain. The tract at residues 436 to 462 (FSCQDSPPPSEEQQPSSPQTPPFTEQP) is disordered.

In terms of assembly, heterodimer; efficient DNA binding requires dimerization with another bHLH protein. Forms a heterodimer with ARNT homolog aha-1; binds DNA as heterodimer.

It localises to the nucleus. Functionally, transcription factor. Efficient DNA binding requires dimerization with another bHLH protein, such as ARNT homolog aha-1. Regulates transcription of target genes, probably acting in complex with aha-1. In Caenorhabditis elegans, this protein is PAS domain-containing protein cky-1.